Reading from the N-terminus, the 337-residue chain is Dolichyl-phosphate beta-glucosyltransferase ALG5C (337 aa).

At 1-6 (MNDLPP) the chain is on the lumenal side. A helical membrane pass occupies residues 7–27 (IANLISNILFVLLIITFLYAL). At 28–337 (CSRFVSDKTL…ADTPISDFEV (310 aa)) the chain is on the cytoplasmic side.

The protein belongs to the glycosyltransferase 2 family.

It localises to the endoplasmic reticulum membrane. The catalysed reaction is a di-trans,poly-cis-dolichyl phosphate + UDP-alpha-D-glucose = a di-trans,poly-cis-dolichyl beta-D-glucosyl phosphate + UDP. The protein operates within protein modification; protein glycosylation. Functionally, dolichyl-phosphate beta-glucosyltransferase involved in the glycosylation of glycoproteins through the synthesis of dolichyl beta-D-glucosyl phosphate which serves as a sugar donor for transfer of three glucose residues to the Man-9-GlcNAc-2-PP-dolichol precursor to N-glycans. The protein is Dolichyl-phosphate beta-glucosyltransferase ALG5C of Trichomonas vaginalis (strain ATCC PRA-98 / G3).